We begin with the raw amino-acid sequence, 819 residues long: Myosin light chain kinase 3 (819 aa).

Disordered stretches follow at residues 146–256 (VPWR…TPSE), 273–334 (VVSP…TPPR), and 347–462 (EMLM…EQDC). At Ser-152 the chain carries Phosphoserine. Composition is skewed to basic and acidic residues over residues 158–170 (EENKERVEEEGGK) and 183–196 (DAREPGEESQKADV). The span at 307–318 (GPGPQCPGPPGL) shows a compositional bias: pro residues. Phosphoserine is present on residues Ser-355, Ser-401, and Ser-408. Positions 515–770 (VCQHEVLGGG…ATQCLKHEWL (256 aa)) constitute a Protein kinase domain. ATP contacts are provided by residues 521 to 529 (LGGGRFGQV) and Lys-544. Asp-636 serves as the catalytic Proton acceptor.

It belongs to the protein kinase superfamily. CAMK Ser/Thr protein kinase family. Requires Mg(2+) as cofactor. Phosphorylated on serine residues. As to expression, restricted to heart.

It is found in the cytoplasm. It carries out the reaction L-seryl-[myosin light chain] + ATP = O-phospho-L-seryl-[myosin light chain] + ADP + H(+). The catalysed reaction is L-threonyl-[myosin light chain] + ATP = O-phospho-L-threonyl-[myosin light chain] + ADP + H(+). Functionally, kinase that phosphorylates MYL2 in vitro. Promotes sarcomere formation in cardiomyocytes and increases cardiomyocyte contractility. The polypeptide is Myosin light chain kinase 3 (MYLK3) (Homo sapiens (Human)).